The primary structure comprises 1013 residues: GTPase-activating protein BEM3 (1013 aa).

Disordered stretches follow at residues 90–197 (TVVE…GSPA), 258–277 (GSRY…PESI), 282–301 (SDLQ…TDLG), and 307–421 (VDTT…HQSK). The segment covering 143-160 (QEATSGAQQVPLLTSSKS) has biased composition (polar residues). Composition is skewed to polar residues over residues 309 to 319 (TTFNAEDNPTG), 333 to 388 (TLQN…TSSN), and 404 to 418 (KSYS…SNSH). The PH domain occupies 555 to 662 (EFAKEGMLLV…WISVLTTLCD (108 aa)). Residues 702–726 (AMDATSPTRPNDPNPVSLTSEEEKE) are disordered. Residues 706 to 720 (TSPTRPNDPNPVSLT) show a composition bias toward polar residues. The Rho-GAP domain occupies 799-1013 (LQLSSHPYQG…PPVNIHIPQI (215 aa)).

It is found in the cytoplasm. Functionally, GTPase-activating protein (GAP) for CDC42 and less efficiently for RHO1. Negative regulator of the pheromone-response pathway through the STE20 protein kinase. This chain is GTPase-activating protein BEM3 (BEM3), found in Eremothecium gossypii (strain ATCC 10895 / CBS 109.51 / FGSC 9923 / NRRL Y-1056) (Yeast).